The following is a 148-amino-acid chain: Lysozyme C-3 (148 aa).

Positions methionine 1–alanine 18 are cleaved as a signal peptide. Residues lysine 19–leucine 148 form the C-type lysozyme domain. 4 disulfides stabilise this stretch: cysteine 24-cysteine 146, cysteine 48-cysteine 134, cysteine 83-cysteine 99, and cysteine 95-cysteine 113. Catalysis depends on residues glutamate 53 and aspartate 71.

This sequence belongs to the glycosyl hydrolase 22 family. Monomer.

The protein localises to the secreted. It carries out the reaction Hydrolysis of (1-&gt;4)-beta-linkages between N-acetylmuramic acid and N-acetyl-D-glucosamine residues in a peptidoglycan and between N-acetyl-D-glucosamine residues in chitodextrins.. Functionally, lysozymes have primarily a bacteriolytic function; those in tissues and body fluids are associated with the monocyte-macrophage system and enhance the activity of immunoagents. This chain is Lysozyme C-3, found in Sus scrofa (Pig).